Reading from the N-terminus, the 88-residue chain is Large ribosomal subunit protein bL27 (88 aa).

The disordered stretch occupies residues 1 to 21 (MAHKKGASSSRNGRDSNAQRL). Polar residues predominate over residues 7–19 (ASSSRNGRDSNAQ).

It belongs to the bacterial ribosomal protein bL27 family.

The sequence is that of Large ribosomal subunit protein bL27 from Frankia casuarinae (strain DSM 45818 / CECT 9043 / HFP020203 / CcI3).